The following is a 205-amino-acid chain: Holliday junction branch migration complex subunit RuvA (205 aa).

Positions 1 to 64 (MIGRIRGLLV…EDAQLLYGFI (64 aa)) are domain I. The tract at residues 65 to 143 (SKQERALFRL…SLMEASVGSE (79 aa)) is domain II. The tract at residues 144–156 (REFMLQSNYTAPV) is flexible linker. The tract at residues 157 to 205 (VANTAEEDAIAALLSLGYKPAQASKAVSAVYVDGIDSESLIKSALKSML) is domain III.

The protein belongs to the RuvA family. Homotetramer. Forms an RuvA(8)-RuvB(12)-Holliday junction (HJ) complex. HJ DNA is sandwiched between 2 RuvA tetramers; dsDNA enters through RuvA and exits via RuvB. An RuvB hexamer assembles on each DNA strand where it exits the tetramer. Each RuvB hexamer is contacted by two RuvA subunits (via domain III) on 2 adjacent RuvB subunits; this complex drives branch migration. In the full resolvosome a probable DNA-RuvA(4)-RuvB(12)-RuvC(2) complex forms which resolves the HJ.

Its subcellular location is the cytoplasm. Functionally, the RuvA-RuvB-RuvC complex processes Holliday junction (HJ) DNA during genetic recombination and DNA repair, while the RuvA-RuvB complex plays an important role in the rescue of blocked DNA replication forks via replication fork reversal (RFR). RuvA specifically binds to HJ cruciform DNA, conferring on it an open structure. The RuvB hexamer acts as an ATP-dependent pump, pulling dsDNA into and through the RuvAB complex. HJ branch migration allows RuvC to scan DNA until it finds its consensus sequence, where it cleaves and resolves the cruciform DNA. The protein is Holliday junction branch migration complex subunit RuvA of Shewanella piezotolerans (strain WP3 / JCM 13877).